Here is a 213-residue protein sequence, read N- to C-terminus: Superoxide dismutase [Fe] (213 aa).

Fe cation contacts are provided by His-28, His-82, Asp-164, and His-168.

Belongs to the iron/manganese superoxide dismutase family. Homotetramer. The cofactor is Fe cation.

The catalysed reaction is 2 superoxide + 2 H(+) = H2O2 + O2. Its function is as follows. Destroys superoxide anion radicals which are normally produced within the cells and which are toxic to biological systems. The protein is Superoxide dismutase [Fe] (sodB) of Aquifex aeolicus (strain VF5).